The primary structure comprises 657 residues: tRNA 5-methylaminomethyl-2-thiouridine biosynthesis bifunctional protein MnmC (657 aa).

The tRNA (mnm(5)s(2)U34)-methyltransferase stretch occupies residues 1–233 (MPRGLILATP…KRDMTVAAFP (233 aa)). Positions 256-657 (LGAGLAGCSV…RALRHGKHAA (402 aa)) are FAD-dependent cmnm(5)s(2)U34 oxidoreductase.

This sequence in the N-terminal section; belongs to the methyltransferase superfamily. tRNA (mnm(5)s(2)U34)-methyltransferase family. It in the C-terminal section; belongs to the DAO family. It depends on FAD as a cofactor.

It localises to the cytoplasm. It carries out the reaction 5-aminomethyl-2-thiouridine(34) in tRNA + S-adenosyl-L-methionine = 5-methylaminomethyl-2-thiouridine(34) in tRNA + S-adenosyl-L-homocysteine + H(+). In terms of biological role, catalyzes the last two steps in the biosynthesis of 5-methylaminomethyl-2-thiouridine (mnm(5)s(2)U) at the wobble position (U34) in tRNA. Catalyzes the FAD-dependent demodification of cmnm(5)s(2)U34 to nm(5)s(2)U34, followed by the transfer of a methyl group from S-adenosyl-L-methionine to nm(5)s(2)U34, to form mnm(5)s(2)U34. In Ralstonia nicotianae (strain ATCC BAA-1114 / GMI1000) (Ralstonia solanacearum), this protein is tRNA 5-methylaminomethyl-2-thiouridine biosynthesis bifunctional protein MnmC.